The following is a 188-amino-acid chain: Ribosome-recycling factor (188 aa).

It belongs to the RRF family.

It localises to the cytoplasm. Responsible for the release of ribosomes from messenger RNA at the termination of protein biosynthesis. May increase the efficiency of translation by recycling ribosomes from one round of translation to another. This is Ribosome-recycling factor from Dinoroseobacter shibae (strain DSM 16493 / NCIMB 14021 / DFL 12).